The sequence spans 131 residues: Large ribosomal subunit protein uL22 (131 aa).

The protein belongs to the universal ribosomal protein uL22 family. In terms of assembly, part of the 50S ribosomal subunit.

In terms of biological role, this protein binds specifically to 23S rRNA; its binding is stimulated by other ribosomal proteins, e.g. L4, L17, and L20. It is important during the early stages of 50S assembly. It makes multiple contacts with different domains of the 23S rRNA in the assembled 50S subunit and ribosome. Functionally, the globular domain of the protein is located near the polypeptide exit tunnel on the outside of the subunit, while an extended beta-hairpin is found that lines the wall of the exit tunnel in the center of the 70S ribosome. The sequence is that of Large ribosomal subunit protein uL22 from Phytoplasma mali (strain AT).